A 116-amino-acid chain; its full sequence is Small ribosomal subunit protein bS6 (116 aa).

The tract at residues 94–116 is disordered; it reads ESITEPSPLTKPKEDRKGDSEAA. Basic and acidic residues predominate over residues 104-116; it reads KPKEDRKGDSEAA.

Belongs to the bacterial ribosomal protein bS6 family.

Functionally, binds together with bS18 to 16S ribosomal RNA. This chain is Small ribosomal subunit protein bS6, found in Idiomarina loihiensis (strain ATCC BAA-735 / DSM 15497 / L2-TR).